A 568-amino-acid chain; its full sequence is bZIP transcription factor 60 (568 aa).

Low complexity-rich tracts occupy residues 1–13 (MAEPDLLAPFADL) and 60–78 (TTSSSSSAAGSPEAGTSSA). Disordered stretches follow at residues 1–29 (MAEPDLLAPFADLPFPPGDDFPDFPTLGD) and 45–134 (DFDV…RKKQ). Residues 1–240 (MAEPDLLAPF…PAKKARKTKK (240 aa)) lie on the Cytoplasmic side of the membrane. Over residues 103 to 113 (GGKDGKDDEAK) the composition is skewed to basic and acidic residues. Residues 111 to 171 (EAKRRARLVR…AENAALKQQL (61 aa)) form the bZIP domain. Positions 113–144 (KRRARLVRNRESAHQSRQRKKQYVEELEGKVK) are basic motif. Residues 150-157 (IADLTARI) form a leucine-zipper region. The helical transmembrane segment at 241–261 (VAGVSLLGLLFLMMVCGCLVP) threads the bilayer. At 262 to 568 (AVNRMYGAAY…LPFKSHSPHL (307 aa)) the chain is on the lumenal side. N-linked (GlcNAc...) asparagine glycans are attached at residues N307, N452, N456, N488, and N499. The tract at residues 479-510 (AIPLRGSTSNDTDHFKAPPKNHSQSHAGRKPV) is disordered.

It belongs to the bZIP family.

Its subcellular location is the endoplasmic reticulum membrane. It is found in the nucleus. Transcription factor involved in endoplasmic reticulum (ER) stress response. Acts as a ER stress sensor and activates the transcription factor BZIP50 and the chaperone BIP1. The polypeptide is bZIP transcription factor 60 (Oryza sativa subsp. japonica (Rice)).